A 278-amino-acid polypeptide reads, in one-letter code: MTILHSTDFFKAGISTVAIEPRLPQSAFPEHHHDFHEIVIVEQGTGIHVFNGQPYTIGGGSVCFIRDHDRHLYEHTDNLCLTNVLYRAPDAFRFLAGVSQLLPQEQEGNYPSHWRVNQTVLQQVRHIVAQMEAMGSETDTHAVASREILFMQLLVLLRKSSLAEEATNNDARLNQLLAWLEDHFAQEICWEEVAAQFSLSLRTLHRQLKQQTGLTPQRYLNRVRLMKARHLLRHSDESVTDIAFRCGFGDSNHFSTLFRREFDWSPRDIRQGRDAILQ.

In terms of domain architecture, HTH araC/xylS-type spans 174–272 (NQLLAWLEDH…DWSPRDIRQG (99 aa)). 2 DNA-binding regions (H-T-H motif) span residues 191–212 (EEVA…KQQT) and 239–262 (VTDI…RREF).

Binds DNA as a dimer.

Its subcellular location is the cytoplasm. Functionally, activates expression of the rhaBAD and rhaT operons. This is HTH-type transcriptional activator RhaS from Klebsiella pneumoniae (strain 342).